Reading from the N-terminus, the 305-residue chain is Glycine--tRNA ligase alpha subunit (305 aa).

This sequence belongs to the class-II aminoacyl-tRNA synthetase family. Tetramer of two alpha and two beta subunits.

The protein localises to the cytoplasm. It catalyses the reaction tRNA(Gly) + glycine + ATP = glycyl-tRNA(Gly) + AMP + diphosphate. In Streptococcus pneumoniae serotype 4 (strain ATCC BAA-334 / TIGR4), this protein is Glycine--tRNA ligase alpha subunit.